A 691-amino-acid chain; its full sequence is Transcription termination factor Rho (691 aa).

Residues 48-303 (ISDHQRGGSV…PEVDETELTE (256 aa)) are disordered. The span at 50–64 (DHQRGGSVADRDAAE) shows a compositional bias: basic and acidic residues. Composition is skewed to low complexity over residues 65–92 (RAAQ…PAAE) and 105–119 (DTSA…QPQA). Basic and acidic residues-rich tracts occupy residues 120–158 (EARE…SERR) and 188–273 (DADR…EGGR). The Rho RNA-BD domain occupies 307–390 (LQPVAGILDV…VKISSVNGQP (84 aa)). ATP contacts are provided by residues 433 to 438 (GKGQRG), 445 to 450 (KAGKTM), and Arg476.

This sequence belongs to the Rho family. As to quaternary structure, homohexamer. The homohexamer assembles into an open ring structure.

Functionally, facilitates transcription termination by a mechanism that involves Rho binding to the nascent RNA, activation of Rho's RNA-dependent ATPase activity, and release of the mRNA from the DNA template. The sequence is that of Transcription termination factor Rho from Micrococcus luteus (Micrococcus lysodeikticus).